The primary structure comprises 580 residues: 2-succinyl-5-enolpyruvyl-6-hydroxy-3-cyclohexene-1-carboxylate synthase (580 aa).

The protein belongs to the TPP enzyme family. MenD subfamily. As to quaternary structure, homodimer. It depends on Mg(2+) as a cofactor. The cofactor is Mn(2+). Requires thiamine diphosphate as cofactor.

It carries out the reaction isochorismate + 2-oxoglutarate + H(+) = 5-enolpyruvoyl-6-hydroxy-2-succinyl-cyclohex-3-ene-1-carboxylate + CO2. Its pathway is quinol/quinone metabolism; 1,4-dihydroxy-2-naphthoate biosynthesis; 1,4-dihydroxy-2-naphthoate from chorismate: step 2/7. It functions in the pathway quinol/quinone metabolism; menaquinone biosynthesis. Functionally, catalyzes the thiamine diphosphate-dependent decarboxylation of 2-oxoglutarate and the subsequent addition of the resulting succinic semialdehyde-thiamine pyrophosphate anion to isochorismate to yield 2-succinyl-5-enolpyruvyl-6-hydroxy-3-cyclohexene-1-carboxylate (SEPHCHC). The chain is 2-succinyl-5-enolpyruvyl-6-hydroxy-3-cyclohexene-1-carboxylate synthase from Listeria monocytogenes serotype 4b (strain F2365).